The chain runs to 181 residues: Probable RNA 2'-phosphotransferase (181 aa).

It belongs to the KptA/TPT1 family.

Its function is as follows. Removes the 2'-phosphate from RNA via an intermediate in which the phosphate is ADP-ribosylated by NAD followed by a presumed transesterification to release the RNA and generate ADP-ribose 1''-2''-cyclic phosphate (APPR&gt;P). May function as an ADP-ribosylase. This is Probable RNA 2'-phosphotransferase from Nostoc punctiforme (strain ATCC 29133 / PCC 73102).